The primary structure comprises 215 residues: Translation initiation factor 6 (215 aa).

Belongs to the eIF-6 family.

Its function is as follows. Binds to the 50S ribosomal subunit and prevents its association with the 30S ribosomal subunit to form the 70S initiation complex. The sequence is that of Translation initiation factor 6 from Archaeoglobus fulgidus (strain ATCC 49558 / DSM 4304 / JCM 9628 / NBRC 100126 / VC-16).